Here is a 149-residue protein sequence, read N- to C-terminus: MAAKVEPFWKRKTLAQLDQDEWESLCDGCGLCCLQKLEDEDDGSVYYTRIACKLLDLQSCRCTNYAERIRFVPDCIQLTPAQADEFQWLPPTCGYRLVAEGKDLPLWHHLVCGDPERVHKERISQSGRMLSETQVAEDDWEDYLIFRAG.

Belongs to the UPF0260 family.

The protein is UPF0260 protein PA1299 of Pseudomonas aeruginosa (strain ATCC 15692 / DSM 22644 / CIP 104116 / JCM 14847 / LMG 12228 / 1C / PRS 101 / PAO1).